The sequence spans 265 residues: Type II pantothenate kinase (265 aa).

Aspartate 6 to lysine 13 contributes to the ATP binding site. Glutamate 70 (proton acceptor) is an active-site residue. Residues threonine 99, glycine 121–glutamine 125, tyrosine 137, and serine 225 contribute to the ATP site.

The protein belongs to the type II pantothenate kinase family. Homodimer.

Its subcellular location is the cytoplasm. The catalysed reaction is (R)-pantothenate + ATP = (R)-4'-phosphopantothenate + ADP + H(+). It functions in the pathway cofactor biosynthesis; coenzyme A biosynthesis; CoA from (R)-pantothenate: step 1/5. Catalyzes the phosphorylation of pantothenate (Pan), the first step in CoA biosynthesis. The polypeptide is Type II pantothenate kinase (Staphylococcus epidermidis (strain ATCC 35984 / DSM 28319 / BCRC 17069 / CCUG 31568 / BM 3577 / RP62A)).